The sequence spans 755 residues: Proprotein convertase subtilisin/kexin type 4 (755 aa).

Residues 1–25 form the signal peptide; sequence MRPAPIALWLRLVLALALVRPRAVG. A propeptide spanning residues 26–113 is cleaved from the precursor; it reads WAPVRAPIYV…QQTLQRRVKR (88 aa). A Peptidase S8 domain is found at 126–440; the sequence is QWYMNSEAQP…YGLLDAGLLV (315 aa). Catalysis depends on charge relay system residues D158, H199, and S373. In terms of domain architecture, P/Homo B spans 449–581; the sequence is TQPQRKCAVR…TLLLYGTAED (133 aa). N475 and N629 each carry an N-linked (GlcNAc...) asparagine glycan. A helical membrane pass occupies residues 709–729; sequence AMVLSLLAVTLGGPVLCGMSM.

This sequence belongs to the peptidase S8 family. Furin subfamily. As to quaternary structure, the proPCSK4 form interacts with HSPA5; the interaction takes place at the endoplasmic reticulum. N-glycosylated. In terms of processing, synthesized in the endoplasmic reticulum as a zymogen, is matured by autocatalytic cleavage between the prodomain and the catalytic domain. As to expression, placenta.

The protein localises to the membrane. It localises to the cytoplasmic vesicle. Its subcellular location is the secretory vesicle. The protein resides in the acrosome membrane. Its function is as follows. Proprotein convertase involved in the processing of hormone and other protein precursors at sites comprised of pairs of basic amino acid residues. In males, important for ADAM2 processing as well as other acrosomal proteins with roles in fertilization and critical for normal fertilization events such as sperm capacitation, acrosome reaction and binding of sperm to zona pellucida. Also plays a role in female fertility, involved in the regulation of trophoblast migration and placental development, may be through the proteolytical processing and activation of proteins such as IGF2. May also participate in folliculogenesis in the ovaries. This is Proprotein convertase subtilisin/kexin type 4 from Homo sapiens (Human).